The sequence spans 190 residues: Protein GrpE (190 aa).

Positions 1–18 are enriched in polar residues; that stretch reads MTETPNTSSEEIQTSEPS. Positions 1 to 21 are disordered; sequence MTETPNTSSEEIQTSEPSPDN.

The protein belongs to the GrpE family. As to quaternary structure, homodimer.

Its subcellular location is the cytoplasm. Its function is as follows. Participates actively in the response to hyperosmotic and heat shock by preventing the aggregation of stress-denatured proteins, in association with DnaK and GrpE. It is the nucleotide exchange factor for DnaK and may function as a thermosensor. Unfolded proteins bind initially to DnaJ; upon interaction with the DnaJ-bound protein, DnaK hydrolyzes its bound ATP, resulting in the formation of a stable complex. GrpE releases ADP from DnaK; ATP binding to DnaK triggers the release of the substrate protein, thus completing the reaction cycle. Several rounds of ATP-dependent interactions between DnaJ, DnaK and GrpE are required for fully efficient folding. The polypeptide is Protein GrpE (Chlamydia trachomatis serovar L2 (strain ATCC VR-902B / DSM 19102 / 434/Bu)).